The following is a 57-amino-acid chain: uncharacterized protein (57 aa).

This is an uncharacterized protein from Saccharomyces cerevisiae (strain ATCC 204508 / S288c) (Baker's yeast).